The chain runs to 414 residues: MELSAVGERVFAAESIIKRRIRKGRIEYLVKWKGWAIKYSTWEPEENILDSRLIAAFEQKERERELYGPKKRGPKPKTFLLKARAQAEALRISDVHFSVKPSASASSPKLHSSAAVHRLKKDIRRCHRMSRRPLPRPDPQGGSPGLRPPISPFSETVRIINRKVKPREPKRNRIILNLKVIDKGPGGGSTAQGTGALARPKVPSRNRVIGKSKKFSESMLRTQIRHMKFGTFALYKPPPAPLAPSTAGKADVASSGPGLLLATPAAAPFDAHSSSSSGCPSPTLQSSDPDDAPPKLLPETLSRSVPNWRESEVLDLSIPPEAAATGQRVPPDVTGAADQALHTALEPTGAGSSEPEAGDWRPEMSPCSNVVVTDVTSNLLTVTIKEFCSPEDFEKVAAGVAGATGGGGGTGPSK.

Residues 11–69 (FAAESIIKRRIRKGRIEYLVKWKGWAIKYSTWEPEENILDSRLIAAFEQKERERELYGP) enclose the Chromo domain. Ser-107 carries the phosphoserine modification. 3 disordered regions span residues 127–152 (HRMSRRPLPRPDPQGGSPGLRPPISP), 267–308 (APFD…VPNW), and 344–365 (ALEPTGAGSSEPEAGDWRPEMS). The segment covering 267-287 (APFDAHSSSSSGCPSPTLQSS) has biased composition (low complexity).

Component of a PRC1-like complex. Distinct PRC1-like core complexes are composed of a RING1 subunit (RING1B or RING1A), one of the six PCGF proteins (PCGF1-6), one PHC protein (PHC1-3) and one of the CBX proteins (CBX2, CBX4, CBX6, CBX7 or CBX8). Interacts with PCGF1, PCGF2, PCGF3, BMI1, PCGF5, PCGF6, RING1 and RNF2. May interact with H3C15 and H3C1. Interacts (via chromodomain) with single-stranded RNA (ssRNA). Post-translationally, ubiquitinated. Ubiquitination regulates the function of the Polycomb group (PcG) multiprotein PRC1-like complex. Deubiquitinated by USP26. In terms of tissue distribution, expressed in mouse embryonic stem cells.

It localises to the nucleus. The protein resides in the chromosome. Component of a Polycomb group (PcG) multiprotein PRC1-like complex, a complex class required to maintain the transcriptionally repressive state of many genes, including Hox genes, throughout development. PcG PRC1 complex acts via chromatin remodeling and modification of histones; it mediates monoubiquitination of histone H2A 'Lys-119', rendering chromatin heritably changed in its expressibility. Possibly contributes to the target selectivity of the PRC1 complex by binding specific regions of chromatin. Recruitment to chromatin might occur in an H3K27me3-independent fashion. May have a PRC1-independent function in embryonic stem cells. This chain is Chromobox protein homolog 6 (Cbx6), found in Mus musculus (Mouse).